The sequence spans 129 residues: Small ribosomal subunit protein uS11 (129 aa).

This sequence belongs to the universal ribosomal protein uS11 family. Part of the 30S ribosomal subunit. Interacts with proteins S7 and S18. Binds to IF-3.

Functionally, located on the platform of the 30S subunit, it bridges several disparate RNA helices of the 16S rRNA. Forms part of the Shine-Dalgarno cleft in the 70S ribosome. This chain is Small ribosomal subunit protein uS11, found in Methylobacterium nodulans (strain LMG 21967 / CNCM I-2342 / ORS 2060).